The primary structure comprises 250 residues: GILT-like protein 1 (250 aa).

A signal peptide spans 1–21; the sequence is MSHKIAAVCLLMSCLIATAYS. Asn157 carries N-linked (GlcNAc...) asparagine glycosylation.

It belongs to the GILT family. Post-translationally, conjugated to URM1, a ubiquitin-like protein.

Its subcellular location is the secreted. In terms of biological role, involved in the immune response to bacterial infection. The chain is GILT-like protein 1 from Drosophila melanogaster (Fruit fly).